Reading from the N-terminus, the 397-residue chain is Elongation factor Tu (397 aa).

Residues 10 to 207 enclose the tr-type G domain; the sequence is LPHVNVGTIG…TLDAYIPEPV (198 aa). The interval 19–26 is G1; that stretch reads GHVDHGKT. 19 to 26 is a binding site for GTP; it reads GHVDHGKT. Thr26 contributes to the Mg(2+) binding site. The interval 60 to 64 is G2; the sequence is GITIN. A G3 region spans residues 81–84; the sequence is DCPG. Residues 81 to 85 and 136 to 139 contribute to the GTP site; these read DCPGH and NKAD. The G4 stretch occupies residues 136–139; the sequence is NKAD. A G5 region spans residues 174 to 176; the sequence is SAR.

Belongs to the TRAFAC class translation factor GTPase superfamily. Classic translation factor GTPase family. EF-Tu/EF-1A subfamily. Monomer.

It is found in the cytoplasm. The catalysed reaction is GTP + H2O = GDP + phosphate + H(+). Functionally, GTP hydrolase that promotes the GTP-dependent binding of aminoacyl-tRNA to the A-site of ribosomes during protein biosynthesis. This Pseudomonas entomophila (strain L48) protein is Elongation factor Tu.